Here is an 88-residue protein sequence, read N- to C-terminus: LYR motif-containing protein 2 (88 aa).

Residues 1-19 (MAVSRLPPAALSLKQFLQR) constitute a mitochondrion transit peptide.

This sequence belongs to the complex I LYR family.

The protein localises to the mitochondrion. Functionally, involved in efficient integration of the N-module into mitochondrial respiratory chain complex I. This Danio rerio (Zebrafish) protein is LYR motif-containing protein 2 (lyrm2).